The chain runs to 200 residues: Prostamide/prostaglandin F synthase (200 aa).

This sequence belongs to the peroxiredoxin-like PRXL2 family. Prostamide/prostaglandin F synthase subfamily.

It localises to the cytoplasm. The protein resides in the cytosol. It catalyses the reaction prostaglandin H2 + [thioredoxin]-dithiol = prostaglandin F2alpha + [thioredoxin]-disulfide. The enzyme catalyses prostamide F2alpha + [thioredoxin]-disulfide = prostamide H2 + [thioredoxin]-dithiol. Catalyzes the reduction of prostaglandin-ethanolamide H(2) (prostamide H(2)) to prostamide F(2alpha) with NADPH as proton donor. Also able to reduce prostaglandin H(2) to prostaglandin F(2alpha). This Salmo salar (Atlantic salmon) protein is Prostamide/prostaglandin F synthase (prxl2b).